Here is a 474-residue protein sequence, read N- to C-terminus: Gasdermin-C (474 aa).

Residues M1–A237 form a triggers pyroptosis region.

It belongs to the gasdermin family. As to quaternary structure, homooligomer; homooligomeric ring-shaped pore complex containing 27-28 subunits when inserted in the membrane. Cleavage by CASP8 relieves autoinhibition by releasing the N-terminal moiety (Gasdermin-C, N-terminal) that initiates pyroptosis. In terms of processing, palmitoylated.

It localises to the cytoplasm. It is found in the cytosol. The protein resides in the cell membrane. With respect to regulation, the full-length protein before cleavage is inactive: intramolecular interactions between N- and C-terminal domains mediate autoinhibition in the absence of activation signal. The intrinsic pyroptosis-inducing activity is carried by the released N-terminal moiety (Gasdermin-C, N-terminal) following cleavage by caspase CASP8. Functionally, this form constitutes the precursor of the pore-forming protein: upon cleavage, the released N-terminal moiety (Gasdermin-C, N-terminal) binds to membranes and forms pores, triggering pyroptosis. In terms of biological role, pore-forming protein that causes membrane permeabilization and pyroptosis. Produced by the cleavage of gasdermin-C by caspase CASP8 in response to death signals. After cleavage, moves to the plasma membrane where it strongly binds to membrane inner leaflet lipids. Homooligomerizes within the membrane and forms pores of 10-15 nanometers (nm) of inner diameter, triggering pyroptosis. This chain is Gasdermin-C, found in Rattus norvegicus (Rat).